Reading from the N-terminus, the 393-residue chain is Beta-1,4-galactosyltransferase 3 (393 aa).

At 1–10 (MLRRLLERPC) the chain is on the cytoplasmic side. Residues 11 to 31 (TLALLVGSQLAVMMYLSLGGF) form a helical; Signal-anchor for type II membrane protein membrane-spanning segment. Residues 32 to 393 (RSLSALFGRD…ANHTALRGSH (362 aa)) lie on the Lumenal side of the membrane. N57 carries N-linked (GlcNAc...) asparagine glycosylation. A disulfide bond links C77 and C119. Residue 130 to 134 (PHRAR) coordinates UDP-alpha-D-galactose. The N-linked (GlcNAc...) asparagine glycan is linked to N166. Residues 169–171 (FNR), 196–197 (VD), Y226, and W258 each bind UDP-alpha-D-galactose. Cysteines 190 and 209 form a disulfide. D197 is a binding site for Mn(2+). Residue 260 to 263 (GEDD) coordinates N-acetyl-D-glucosamine. A Mn(2+)-binding site is contributed by H291. Position 291-293 (291-293 (HRG)) interacts with UDP-alpha-D-galactose. Residue R303 participates in N-acetyl-D-glucosamine binding. N337 and N385 each carry an N-linked (GlcNAc...) asparagine glycan. Residues 339-393 (TADIGTDPRGPRAPSGPRYPPGSSQAFRQEMLQRRPPARPGPPPTANHTALRGSH) form a disordered region.

It belongs to the glycosyltransferase 7 family. Requires Mn(2+) as cofactor.

Its subcellular location is the golgi apparatus. The protein localises to the golgi stack membrane. It carries out the reaction an N-acetyl-beta-D-glucosaminyl derivative + UDP-alpha-D-galactose = a beta-D-galactosyl-(1-&gt;4)-N-acetyl-beta-D-glucosaminyl derivative + UDP + H(+). It catalyses the reaction N-acetyl-D-glucosamine + UDP-alpha-D-galactose = beta-D-galactosyl-(1-&gt;4)-N-acetyl-D-glucosamine + UDP + H(+). The enzyme catalyses a beta-D-GlcNAc-(1-&gt;3)-beta-D-Gal-(1-&gt;4)-beta-D-Glc-(1&lt;-&gt;1)-Cer(d18:1(4E)) + UDP-alpha-D-galactose = a neolactoside nLc4Cer(d18:1(4E)) + UDP + H(+). The catalysed reaction is a beta-D-glucosylceramide + UDP-alpha-D-galactose = a beta-D-galactosyl-(1-&gt;4)-beta-D-glucosyl-(1&lt;-&gt;1)-ceramide + UDP + H(+). It carries out the reaction a neolactoside IV(3)-beta-GlcNAc-nLc4Cer + UDP-alpha-D-galactose = a neolactoside nLc6Cer + UDP + H(+). It participates in protein modification; protein glycosylation. In terms of biological role, responsible for the synthesis of complex-type N-linked oligosaccharides in many glycoproteins as well as the carbohydrate moieties of glycolipids. This chain is Beta-1,4-galactosyltransferase 3 (B4GALT3), found in Pongo abelii (Sumatran orangutan).